A 402-amino-acid polypeptide reads, in one-letter code: Caspase-1 (402 aa).

Residues M1–S91 enclose the CARD domain. Positions M1 to Q118 are excised as a propeptide. The segment at F98–F125 is disordered. Over residues E113–G123 the composition is skewed to basic and acidic residues. Residues H236 and C284 contribute to the active site. Residues S297–D314 constitute a propeptide that is removed on maturation. S301 carries the post-translational modification Phosphoserine. The residue at position 343 (R343) is an Omega-N-methylarginine.

Belongs to the peptidase C14A family. As to quaternary structure, heterotetramer that consists of two anti-parallel arranged heterodimers, each one formed by a 20 kDa (Caspase-1 subunit p20) and a 10 kDa (Caspase-1 subunit p10) subunit. May be a component of the inflammasome, a protein complex which also includes PYCARD, CARD8 and NLRP2 and whose function would be the activation of pro-inflammatory caspases. Component of the AIM2 PANoptosome complex, a multiprotein complex that drives inflammatory cell death (PANoptosis). Both the p10 and p20 subunits interact with MEFV. Interacts with CARD17P/INCA and CARD18. Interacts with SERPINB1; this interaction regulates CASP1 activity. Heterotetramer that consists of two anti-parallel arranged heterodimers, each one formed by a 20 kDa (Caspase-1 subunit p20) and a 10 kDa (Caspase-1 subunit p10) subunit. Post-translationally, the two subunits are derived from the precursor sequence by an autocatalytic mechanism. Ubiquitinated via 'Lys-11'-linked polyubiquitination. Deubiquitinated by USP8. As to expression, high level expression seen in spleen and lung, low level expression seen in brain, heart, liver, kidney, testis and skeletal muscle.

The protein localises to the cytoplasm. It localises to the cell membrane. The catalysed reaction is Strict requirement for an Asp residue at position P1 and has a preferred cleavage sequence of Tyr-Val-Ala-Asp-|-.. In terms of biological role, thiol protease involved in a variety of inflammatory processes by proteolytically cleaving other proteins, such as the precursors of the inflammatory cytokines interleukin-1 beta (IL1B) and interleukin 18 (IL18) as well as the pyroptosis inducer Gasdermin-D (GSDMD), into active mature peptides. Plays a key role in cell immunity as an inflammatory response initiator: once activated through formation of an inflammasome complex, it initiates a pro-inflammatory response through the cleavage of the two inflammatory cytokines IL1B and IL18, releasing the mature cytokines which are involved in a variety of inflammatory processes. Cleaves a tetrapeptide after an Asp residue at position P1. Also initiates pyroptosis, a programmed lytic cell death pathway, through cleavage of GSDMD. In contrast to cleavage of interleukin IL1B, recognition and cleavage of GSDMD is not strictly dependent on the consensus cleavage site but depends on an exosite interface on CASP1 that recognizes and binds the Gasdermin-D, C-terminal (GSDMD-CT) part. Cleaves and activates CASP7 in response to bacterial infection, promoting plasma membrane repair. Upon inflammasome activation, during DNA virus infection but not RNA virus challenge, controls antiviral immunity through the cleavage of CGAS, rendering it inactive. In apoptotic cells, cleaves SPHK2 which is released from cells and remains enzymatically active extracellularly. This Mus musculus (Mouse) protein is Caspase-1 (Casp1).